We begin with the raw amino-acid sequence, 127 residues long: Large ribosomal subunit protein bL19 (127 aa).

Belongs to the bacterial ribosomal protein bL19 family.

This protein is located at the 30S-50S ribosomal subunit interface and may play a role in the structure and function of the aminoacyl-tRNA binding site. The polypeptide is Large ribosomal subunit protein bL19 (Paraburkholderia phymatum (strain DSM 17167 / CIP 108236 / LMG 21445 / STM815) (Burkholderia phymatum)).